Here is a 321-residue protein sequence, read N- to C-terminus: ATP-dependent 6-phosphofructokinase (321 aa).

Gly-11 is a binding site for ATP. An ADP-binding site is contributed by 21 to 25 (RAVVR). ATP-binding positions include 72-73 (RC) and 102-105 (GDGS). Asp-103 contacts Mg(2+). Position 126–128 (126–128 (TID)) interacts with substrate. Catalysis depends on Asp-128, which acts as the Proton acceptor. Residue Arg-155 coordinates ADP. Substrate-binding positions include Arg-163 and 170-172 (MGR). ADP is bound by residues 186–188 (GAE), Arg-212, and 214–216 (KLH). Residues Glu-223, Arg-245, and 251-254 (HIQR) each bind substrate.

Belongs to the phosphofructokinase type A (PFKA) family. ATP-dependent PFK group I subfamily. Prokaryotic clade 'B1' sub-subfamily. As to quaternary structure, homotetramer. The cofactor is Mg(2+).

The protein resides in the cytoplasm. The enzyme catalyses beta-D-fructose 6-phosphate + ATP = beta-D-fructose 1,6-bisphosphate + ADP + H(+). The protein operates within carbohydrate degradation; glycolysis; D-glyceraldehyde 3-phosphate and glycerone phosphate from D-glucose: step 3/4. With respect to regulation, allosterically activated by ADP and other diphosphonucleosides, and allosterically inhibited by phosphoenolpyruvate. In terms of biological role, catalyzes the phosphorylation of D-fructose 6-phosphate to fructose 1,6-bisphosphate by ATP, the first committing step of glycolysis. The chain is ATP-dependent 6-phosphofructokinase from Thermoanaerobacter pseudethanolicus (strain ATCC 33223 / 39E) (Clostridium thermohydrosulfuricum).